The following is a 321-amino-acid chain: MSKPIQMEKGVKYRDADKMALIPVKNMPTEKKEVLRKPEWMKIKLPSSSKRIDEIKSAMRKNNLHSVCEEASCPNLAECFNHGTATFMILGAICTRRCPFCDVAHGRPVTPEAEEPKKLAKTIKDMKLKYVVITSVDRDDLRDGGAQHFADCNREIRELNPEIRIETLVPDFRGRMDRALDAMHSNPPDVFNHNLETAPRLYRKVRPGANYQWSLDLLKKFKEQHPTVPTKSGVMMGLGETKEEIVEVLKDLRAHGVTMLTLGQYLAPSRHHLPVERYVPPAEFDELKVIALELGFTHAACGPFVRSSYHADLQAKGEEVK.

Cysteine 68, cysteine 73, cysteine 79, cysteine 94, cysteine 98, cysteine 101, and serine 308 together coordinate [4Fe-4S] cluster. Positions 80–297 (FNHGTATFMI…KVIALELGFT (218 aa)) constitute a Radical SAM core domain.

The protein belongs to the radical SAM superfamily. Lipoyl synthase family. The cofactor is [4Fe-4S] cluster.

Its subcellular location is the cytoplasm. It carries out the reaction [[Fe-S] cluster scaffold protein carrying a second [4Fe-4S](2+) cluster] + N(6)-octanoyl-L-lysyl-[protein] + 2 oxidized [2Fe-2S]-[ferredoxin] + 2 S-adenosyl-L-methionine + 4 H(+) = [[Fe-S] cluster scaffold protein] + N(6)-[(R)-dihydrolipoyl]-L-lysyl-[protein] + 4 Fe(3+) + 2 hydrogen sulfide + 2 5'-deoxyadenosine + 2 L-methionine + 2 reduced [2Fe-2S]-[ferredoxin]. It participates in protein modification; protein lipoylation via endogenous pathway; protein N(6)-(lipoyl)lysine from octanoyl-[acyl-carrier-protein]: step 2/2. Functionally, catalyzes the radical-mediated insertion of two sulfur atoms into the C-6 and C-8 positions of the octanoyl moiety bound to the lipoyl domains of lipoate-dependent enzymes, thereby converting the octanoylated domains into lipoylated derivatives. The sequence is that of Lipoyl synthase from Aliivibrio salmonicida (strain LFI1238) (Vibrio salmonicida (strain LFI1238)).